Consider the following 354-residue polypeptide: Homeobox protein Nkx-2.4 (354 aa).

A DNA-binding region (homeobox) is located at residues 189 to 248; sequence RRKRRVLFSQAQVYELERRFKQQKYLSAPEREHLASMIHLTPTQVKIWFQNHRYKMKRQA. A disordered region spans residues 246 to 329; sequence RQAKDKAAQQ…PALHGPGGGL (84 aa). Over residues 263–272 the composition is skewed to pro residues; sequence GPPPPPPPSP.

The protein belongs to the NK-2 homeobox family.

The protein localises to the nucleus. In terms of biological role, probable transcription factor. The polypeptide is Homeobox protein Nkx-2.4 (NKX2-4) (Homo sapiens (Human)).